Reading from the N-terminus, the 555-residue chain is Carboxypeptidase Y homolog A (555 aa).

The signal sequence occupies residues 1–17; it reads MRGLATTLLIGAAAAAT. Positions 18-136 are excised as a propeptide; sequence YPAQQVLKAP…RLETFDLRVK (119 aa). 5 cysteine pairs are disulfide-bonded: Cys191/Cys430, Cys325/Cys339, Cys349/Cys372, Cys356/Cys365, and Cys394/Cys400. Asn222 carries an N-linked (GlcNAc...) asparagine glycan. Residue Ser278 is part of the active site. Residue Asp469 is part of the active site. An N-linked (GlcNAc...) asparagine glycan is attached at Asn520. His531 is a catalytic residue.

Belongs to the peptidase S10 family.

The protein resides in the vacuole. It catalyses the reaction Release of a C-terminal amino acid with broad specificity.. Its function is as follows. Vacuolar carboxypeptidase involved in degradation of small peptides. Digests preferentially peptides containing an aliphatic or hydrophobic residue in P1' position, as well as methionine, leucine or phenylalanine in P1 position of ester substrate. In Talaromyces marneffei (strain ATCC 18224 / CBS 334.59 / QM 7333) (Penicillium marneffei), this protein is Carboxypeptidase Y homolog A (cpyA).